Reading from the N-terminus, the 483-residue chain is MNYPYEDFLDLFFSTHTDPLATAASTSSNGYSLNDLDIDWDCDFRDVIESIMGDEGAMMEPESEAVPMLHDQEGLCNSASTGLSVADGVSFGEPKTDESKGLRLVHLLVAAADASTGANKSRELTRVILARLKDLVSPGDRTNMERLAAHFTNGLSKLLERDSVLCPQQHRDDVYDQADVISAFELLQNMSPYVNFGYLTATQAILEAVKYERRIHIVDYDINEGVQWASLMQALVSRNTGPSAQHLRITALSRATNGKKSVAAVQETGRRLTAFADSIGQPFSYQHCKLDTNAFSTSSLKLVRGEAVVINCMLHLPRFSHQTPSSVISFLSEAKTLNPKLVTLVHEEVGLMGNQGFLYRFMDLLHQFSAIFDSLEAGLSIANPARGFVERVFIGPWVANWLTRITANDAEVESFASWPQWLETNGFKPLEVSFTNRCQAKLLLSLFNDGFRVEELGQNGLVLGWKSRRLVSASFWASCQTNQ.

One can recognise a GRAS domain in the interval 95 to 477; that stretch reads KTDESKGLRL…RRLVSASFWA (383 aa). Positions 102 to 165 are leucine repeat I (LRI); the sequence is LRLVHLLVAA…SKLLERDSVL (64 aa). The interval 184-251 is VHIID; sequence FELLQNMSPY…PSAQHLRITA (68 aa). The VHIID motif lies at 215-219; sequence IHIVD. The tract at residues 267–299 is leucine repeat II (LRII); sequence ETGRRLTAFADSIGQPFSYQHCKLDTNAFSTSS. Positions 308-400 are PFYRE; that stretch reads VVINCMLHLP…RVFIGPWVAN (93 aa). Residues 403-477 form an SAW region; that stretch reads TRITANDAEV…RRLVSASFWA (75 aa).

It belongs to the GRAS family. Expressed in seedlings, roots, leaves and flowers.

It is found in the nucleus. Probable transcription factor involved in plant development. The protein is Scarecrow-like protein 26 (SCL26) of Arabidopsis thaliana (Mouse-ear cress).